Here is a 344-residue protein sequence, read N- to C-terminus: MGHRTRMILVLTLVVMSIWGSDASAMQKTKFDAPLLTEKIATNRSIIVDIEGKGDYTSVQKAIDAVPVGNSNWIIVHVRKGIYKERVHIPENKPFIFMRGNGKGKTVIESSQSSVDNVASATFKVEANHFVAFGISIRNDAPVGMAFTSENQSVAAFVAADKVAFYHCAFYSLHNTLFDNKGRHYYHECYIQGSIDFIFGRATSIFNNCEIFVISDKRVKPYGSITAHHRESAEEKTGYVFIRGKVYGIDEVYLGRAKGPYSRVIFAKTYLSKTVVPDGWTNWSYHGSTQNLYHGEYKCHGPGAERQKRSDWAKDLTKQEVESFLSIDFIDGTSWLPVWLQEKF.

The first 23 residues, 1–23, serve as a signal peptide directing secretion; sequence MGHRTRMILVLTLVVMSIWGSDA. N43 and N151 each carry an N-linked (GlcNAc...) asparagine glycan. Substrate is bound at residue Q152. Catalysis depends on D196, which acts as the Nucleophile. A substrate-binding site is contributed by R256. N-linked (GlcNAc...) asparagine glycosylation occurs at N282.

This sequence belongs to the pectinesterase family. As to expression, expressed in flower buds.

It is found in the secreted. Its subcellular location is the cell wall. The enzyme catalyses [(1-&gt;4)-alpha-D-galacturonosyl methyl ester](n) + n H2O = [(1-&gt;4)-alpha-D-galacturonosyl](n) + n methanol + n H(+). It participates in glycan metabolism; pectin degradation; 2-dehydro-3-deoxy-D-gluconate from pectin: step 1/5. Its function is as follows. Acts in the modification of cell walls via demethylesterification of cell wall pectin. This Arabidopsis thaliana (Mouse-ear cress) protein is Probable pectinesterase 67 (PME67).